We begin with the raw amino-acid sequence, 571 residues long: Urease subunit alpha (571 aa).

A Urease domain is found at 133–571; sequence GGIDTHIHFV…LPLAQRYFLF (439 aa). Histidine 138, histidine 140, and lysine 221 together coordinate Ni(2+). Lysine 221 is subject to N6-carboxylysine. Residue histidine 223 coordinates substrate. The Ni(2+) site is built by histidine 250 and histidine 276. The Proton donor role is filled by histidine 324. Aspartate 364 contacts Ni(2+).

This sequence belongs to the metallo-dependent hydrolases superfamily. Urease alpha subunit family. As to quaternary structure, heterotrimer of UreA (gamma), UreB (beta) and UreC (alpha) subunits. Three heterotrimers associate to form the active enzyme. It depends on Ni cation as a cofactor. Carboxylation allows a single lysine to coordinate two nickel ions.

The protein localises to the cytoplasm. It carries out the reaction urea + 2 H2O + H(+) = hydrogencarbonate + 2 NH4(+). Its pathway is nitrogen metabolism; urea degradation; CO(2) and NH(3) from urea (urease route): step 1/1. The polypeptide is Urease subunit alpha (Anaeromyxobacter sp. (strain K)).